The sequence spans 670 residues: RxLR effector protein PSR2 (670 aa).

An N-terminal signal peptide occupies residues 1–17; the sequence is MRLQCVVLFAALTLVAA. Residues 39–54 carry the RxLR-dEER motif; that stretch reads RLLRPGNPAGKEDEER. N-linked (GlcNAc...) asparagine glycosylation is present at N57. The stretch at 79–126 is one WY1 repeat; that stretch reads KLLKWADAKKPPETVFTRLRLDKTGTQLFDNTDFPVWAAYTRSVAQTD. The 7 X 93 AA tandem repeats stretch occupies residues 79–670; sequence KLLKWADAKK…YSAKFKVRWG (592 aa). Residues 127–217 form an LWY2 repeat; that stretch reads SEASAVMLKT…NYMKLSNKEN (91 aa). Residues 218-308 form an LWY3 repeat; sequence PKAQTTLIAT…KYINYYNKEN (91 aa). An LWY4 repeat occupies 309 to 399; the sequence is PDEKTTVLAK…KYTENFNLNK (91 aa). An LWY5 repeat occupies 400–492; sequence EINEQVTAIQ…KFLEKYNTAN (93 aa). Residues 493-583 form an LWY6 repeat; it reads PGKEQTMISG…KYLNAFNDKA (91 aa). Residues 584 to 670 form an LWY7 repeat; the sequence is PVKKALMIDT…YSAKFKVRWG (87 aa).

It belongs to the RxLR effector family. In terms of assembly, interacts with host dsRNA-binding protein DRB4.

Its subcellular location is the secreted. It is found in the host cell. In terms of biological role, secreted effector that possesses RNA silencing suppression activity by inhibiting the biogenesis of small RNAs in the host plant to promote enhanced susceptibility of host to the pathogen during infection. Interferes with secondary siRNA production by associating with host dsRNA-binding protein DRB4. Inhibits the host salicylic acid pathway during infection. The polypeptide is RxLR effector protein PSR2 (Phytophthora sojae (Soybean stem and root rot agent)).